The primary structure comprises 357 residues: Biotin synthase (357 aa).

In terms of domain architecture, Radical SAM core spans 41-268; that stretch reads NEVQISRLLS…KSRVRLSAGR (228 aa). Residues C56, C60, and C63 each coordinate [4Fe-4S] cluster. [2Fe-2S] cluster-binding residues include C100, C131, C191, and R263.

This sequence belongs to the radical SAM superfamily. Biotin synthase family. In terms of assembly, homodimer. It depends on [4Fe-4S] cluster as a cofactor. [2Fe-2S] cluster serves as cofactor.

The catalysed reaction is (4R,5S)-dethiobiotin + (sulfur carrier)-SH + 2 reduced [2Fe-2S]-[ferredoxin] + 2 S-adenosyl-L-methionine = (sulfur carrier)-H + biotin + 2 5'-deoxyadenosine + 2 L-methionine + 2 oxidized [2Fe-2S]-[ferredoxin]. It participates in cofactor biosynthesis; biotin biosynthesis; biotin from 7,8-diaminononanoate: step 2/2. Its function is as follows. Catalyzes the conversion of dethiobiotin (DTB) to biotin by the insertion of a sulfur atom into dethiobiotin via a radical-based mechanism. This chain is Biotin synthase, found in Shewanella denitrificans (strain OS217 / ATCC BAA-1090 / DSM 15013).